The following is a 186-amino-acid chain: Elongation factor P (186 aa).

The protein belongs to the elongation factor P family.

The protein localises to the cytoplasm. It functions in the pathway protein biosynthesis; polypeptide chain elongation. Involved in peptide bond synthesis. Stimulates efficient translation and peptide-bond synthesis on native or reconstituted 70S ribosomes in vitro. Probably functions indirectly by altering the affinity of the ribosome for aminoacyl-tRNA, thus increasing their reactivity as acceptors for peptidyl transferase. The polypeptide is Elongation factor P (Prochlorococcus marinus (strain MIT 9211)).